Consider the following 204-residue polypeptide: uncharacterized protein (204 aa).

A disordered region spans residues 47-108 (TDSSDDEGGA…EDSDEEGEGG (62 aa)). Residues 49–106 (SSDDEGGASSGDEGEASSDDEGDASSDDEEEASSDGEGVVEDEETLDAEGEDSDEEGE) are compositionally biased toward acidic residues.

Its subcellular location is the mitochondrion. This is an uncharacterized protein from Paramecium tetraurelia.